Reading from the N-terminus, the 250-residue chain is Kv channel-interacting protein 4 (250 aa).

The tract at residues 2-44 is KIS; that stretch reads NVRRVESISAQLEEASSTGGFLYAQNSTKRSIKERLMKLLPCS. Residues S17 and S56 each carry the phosphoserine modification. Positions 61–117 constitute an EF-hand 1; degenerate domain; that stretch reads LEMATVRHRPEALELLEAQSKFTKKELQILYRGFKNECPSGVVNEETFKEIYSQFFP. 3 EF-hand domains span residues 120-155, 156-191, and 204-239; these read DSTTYAHFLFNAFDTDHNGAVSFEDFIKGLSILLRG, TVQEKLNWAFNLYDINKDGYITKEEMLDIMKAIYDM, and APRQHVETFFQKMDKNKDGVVTIDEFIESCQKDENI. D133, D135, N137, D144, D169, N171, D173, Y175, E180, D217, N219, D221, and E228 together coordinate Ca(2+). Residues 237–250 are interaction with KCND2; the sequence is ENIMRSMQLFENVI.

This sequence belongs to the recoverin family. As to quaternary structure, component of heteromultimeric potassium channels. Identified in potassium channel complexes containing KCND1, KCND2, KCND3, KCNIP1, KCNIP2, KCNIP3, KCNIP4, DPP6 and DPP10. Interacts with KCND2. Interacts with KCND3. Interacts with the C-terminus of PSEN2 and probably PSEN1.

The protein resides in the cell membrane. It localises to the cytoplasm. The protein localises to the peroxisome. In terms of biological role, regulatory subunit of Kv4/D (Shal)-type voltage-gated rapidly inactivating A-type potassium channels. Modulates KCND2 channel density, inactivation kinetics and rate of recovery from inactivation in a calcium-dependent and isoform-specific manner. Modulates KCND3/Kv4.3 currents. Isoform 4 does not increase KCND2 expression at the cell membrane. Isoform 4 retains KCND3 in the endoplasmic reticulum and negatively regulates its expression at the cell membrane. This Macaca fascicularis (Crab-eating macaque) protein is Kv channel-interacting protein 4 (KCNIP4).